An 89-amino-acid polypeptide reads, in one-letter code: Long neurotoxin homolog NTL2 (89 aa).

The first 21 residues, M1–T21, serve as a signal peptide directing secretion. 5 disulfides stabilise this stretch: C24–C45, C27–C32, C38–C66, C70–C81, and C82–C87. Positions R54–D56 match the Cell attachment site motif.

The protein belongs to the three-finger toxin family. Ancestral subfamily. Orphan group V sub-subfamily. In terms of tissue distribution, expressed by the venom gland.

It localises to the secreted. Functionally, exhibits M2 muscarinic acetylcholine receptor (CHRM2)-blocking activity, but has a weak binding activity toward nicotinic AChR. Moreover, it inhibits collagen-induced platelet aggregation. In Bungarus multicinctus (Many-banded krait), this protein is Long neurotoxin homolog NTL2.